The following is a 128-amino-acid chain: Large ribosomal subunit protein bL12 (128 aa).

This sequence belongs to the bacterial ribosomal protein bL12 family. In terms of assembly, homodimer. Part of the ribosomal stalk of the 50S ribosomal subunit. Forms a multimeric L10(L12)X complex, where L10 forms an elongated spine to which 2 to 4 L12 dimers bind in a sequential fashion. Binds GTP-bound translation factors.

Functionally, forms part of the ribosomal stalk which helps the ribosome interact with GTP-bound translation factors. Is thus essential for accurate translation. The sequence is that of Large ribosomal subunit protein bL12 from Halorhodospira halophila (strain DSM 244 / SL1) (Ectothiorhodospira halophila (strain DSM 244 / SL1)).